The following is a 427-amino-acid chain: Glutamate-1-semialdehyde 2,1-aminomutase (427 aa).

At Lys-265 the chain carries N6-(pyridoxal phosphate)lysine.

It belongs to the class-III pyridoxal-phosphate-dependent aminotransferase family. HemL subfamily. In terms of assembly, homodimer. Requires pyridoxal 5'-phosphate as cofactor.

It localises to the cytoplasm. The enzyme catalyses (S)-4-amino-5-oxopentanoate = 5-aminolevulinate. It functions in the pathway porphyrin-containing compound metabolism; protoporphyrin-IX biosynthesis; 5-aminolevulinate from L-glutamyl-tRNA(Glu): step 2/2. This chain is Glutamate-1-semialdehyde 2,1-aminomutase, found in Shewanella amazonensis (strain ATCC BAA-1098 / SB2B).